A 137-amino-acid chain; its full sequence is Large ribosomal subunit protein uL16c (137 aa).

Belongs to the universal ribosomal protein uL16 family. As to quaternary structure, part of the 50S ribosomal subunit.

The protein localises to the plastid. Its subcellular location is the chloroplast. In Hordeum vulgare (Barley), this protein is Large ribosomal subunit protein uL16c.